The primary structure comprises 177 residues: Protein PrsK (177 aa).

The signal sequence occupies residues 1–21 (MIKSTGALLLFAALSAGQAMA).

Its subcellular location is the fimbrium. The protein is Protein PrsK (prsK) of Escherichia coli.